Consider the following 371-residue polypeptide: tRNA (guanine(26)-N(2))-dimethyltransferase (371 aa).

The region spanning 1 to 370 (MDVSEGGVTV…GGLAEVEAAV (370 aa)) is the Trm1 methyltransferase domain. The S-adenosyl-L-methionine site is built by arginine 36, arginine 66, aspartate 81, aspartate 107, and alanine 108. Zn(2+)-binding residues include cysteine 238, cysteine 241, cysteine 258, and cysteine 261.

It belongs to the class I-like SAM-binding methyltransferase superfamily. Trm1 family.

It catalyses the reaction guanosine(26) in tRNA + 2 S-adenosyl-L-methionine = N(2)-dimethylguanosine(26) in tRNA + 2 S-adenosyl-L-homocysteine + 2 H(+). Functionally, dimethylates a single guanine residue at position 26 of a number of tRNAs using S-adenosyl-L-methionine as donor of the methyl groups. This chain is tRNA (guanine(26)-N(2))-dimethyltransferase, found in Halobacterium salinarum (strain ATCC 700922 / JCM 11081 / NRC-1) (Halobacterium halobium).